The sequence spans 369 residues: uncharacterized protein (369 aa).

Belongs to the myo-inositol 1-phosphate synthase family.

This is an uncharacterized protein from Mycobacterium leprae (strain TN).